The primary structure comprises 630 residues: Betaine/ectoine transporter LcoP (630 aa).

Polar residues predominate over residues 1-13 (MSTNSGNNLPESQ). Residues 1 to 28 (MSTNSGNNLPESQESPEEPHYPHDTHPG) are disordered. The span at 17 to 26 (EEPHYPHDTH) shows a compositional bias: basic and acidic residues. 12 helical membrane passes run 47–67 (TVFGVTAALILAFIAWGISSP), 85–105 (TGWLLNFVMLIGIGTMLYIAF), 125–145 (FSWIAMMFGAGIGVGIFFFGP), 177–197 (FHWGLSAWGLYALVGGALAYS), 230–250 (MAIIATLFGTAATLGLSAIQV), 267–287 (ILIAIIAILTIGFIISSVSGV), 299–319 (ISLTLGLVLFVFITGPTLFLL), 354–374 (WTAFYWAWWIAWTPFVGMFIA), 385–405 (FALITMAIPSFILILAFTIFG), 436–456 (LPLYSITPFILIFVLAVFFVT), 479–499 (LIVVFWGLCMMGIAVVMLLTG), and 510–530 (LTILIAIPFALVLIVMAIAFI). A disordered region spans residues 611 to 630 (WADGWTPESTEEGEVDAKKD).

This sequence belongs to the BCCT transporter (TC 2.A.15) family.

Its subcellular location is the cell membrane. With respect to regulation, uptake is activated by hyperosmotic stress. Shows a small but significant chill stimulation around 15 degrees Celsius. Involved in the uptake of osmoprotectants. Can transport betaine and ectoine. Na(+) is probably the coupling ion. This Corynebacterium glutamicum (strain ATCC 13032 / DSM 20300 / JCM 1318 / BCRC 11384 / CCUG 27702 / LMG 3730 / NBRC 12168 / NCIMB 10025 / NRRL B-2784 / 534) protein is Betaine/ectoine transporter LcoP.